The sequence spans 294 residues: N-acetylmuramic acid 6-phosphate etherase (294 aa).

The SIS domain maps to 54-217; sequence VIKSFEEEGR…STASMIGVGK (164 aa). Residue glutamate 82 is the Proton donor of the active site. Glutamate 113 is an active-site residue.

It belongs to the GCKR-like family. MurNAc-6-P etherase subfamily. As to quaternary structure, homodimer.

The catalysed reaction is N-acetyl-D-muramate 6-phosphate + H2O = N-acetyl-D-glucosamine 6-phosphate + (R)-lactate. It participates in amino-sugar metabolism; N-acetylmuramate degradation. Functionally, specifically catalyzes the cleavage of the D-lactyl ether substituent of MurNAc 6-phosphate, producing GlcNAc 6-phosphate and D-lactate. This is N-acetylmuramic acid 6-phosphate etherase from Bacillus cereus (strain ATCC 14579 / DSM 31 / CCUG 7414 / JCM 2152 / NBRC 15305 / NCIMB 9373 / NCTC 2599 / NRRL B-3711).